The primary structure comprises 846 residues: Patched domain-containing protein 4 (846 aa).

The next 10 helical transmembrane spans lie at 41 to 61, 230 to 250, 265 to 285, 293 to 313, 336 to 356, 373 to 393, 465 to 485, 660 to 680, 686 to 706, and 718 to 738; these read HPVF…LSAL, SILA…TATL, GLLG…IFFI, TLLG…FELL, VMVT…MGAS, VSIL…LVFA, PFVV…CLQI, PVLI…FLVI, FWLI…MTLW, and LIYT…TFVL. The region spanning 233-392 is the SSD domain; it reads ARSKVLVSLV…FSFFGSCLVF (160 aa). Asn-762 carries an N-linked (GlcNAc...) asparagine glycan. Helical transmembrane passes span 765–785 and 787–807; these read SFLI…FTLF and CLLL…PVFL.

This sequence belongs to the patched family.

It is found in the membrane. Could act as a repressor of canonical hedgehog signaling by antagonizing the effects of SMO, as suggested by down-regulation of hedgehog target genes, including GLI1, PTCH1, and PTCH2 in PTCHD4-expressing cells. This is Patched domain-containing protein 4 (PTCHD4) from Homo sapiens (Human).